Reading from the N-terminus, the 256-residue chain is DNA repair protein RecO (256 aa).

The protein belongs to the RecO family.

In terms of biological role, involved in DNA repair and RecF pathway recombination. This Anaeromyxobacter sp. (strain Fw109-5) protein is DNA repair protein RecO.